Consider the following 112-residue polypeptide: Nitrogen regulatory protein P-II (112 aa).

Residue tyrosine 51 is modified to O-UMP-tyrosine.

The protein belongs to the P(II) protein family. In terms of assembly, homotrimer.

It localises to the plastid. The protein localises to the chloroplast. Functionally, P-II indirectly controls the transcription of the glutamine synthetase gene (glnA). P-II prevents NR-II-catalyzed conversion of NR-I to NR-I-phosphate, the transcriptional activator of glnA. When P-II is uridylylated to P-II-UMP, these events are reversed. When the ratio of Gln to 2-ketoglutarate decreases, P-II is uridylylated to P-II-UMP, which causes the deadenylation of glutamine synthetase, so activating the enzyme. This Porphyra purpurea (Red seaweed) protein is Nitrogen regulatory protein P-II (glnB).